The following is a 222-amino-acid chain: Ribosome maturation factor RimM (222 aa).

Residues 1-22 (MTERKQGAARPLNRPLVQPQGE) are disordered. The PRC barrel domain maps to 145–222 (EDEFYWVDLI…RIVVDWGLDY (78 aa)).

The protein belongs to the RimM family. In terms of assembly, binds ribosomal protein uS19.

It localises to the cytoplasm. An accessory protein needed during the final step in the assembly of 30S ribosomal subunit, possibly for assembly of the head region. Essential for efficient processing of 16S rRNA. May be needed both before and after RbfA during the maturation of 16S rRNA. It has affinity for free ribosomal 30S subunits but not for 70S ribosomes. The sequence is that of Ribosome maturation factor RimM from Cupriavidus necator (strain ATCC 17699 / DSM 428 / KCTC 22496 / NCIMB 10442 / H16 / Stanier 337) (Ralstonia eutropha).